Reading from the N-terminus, the 360-residue chain is Alanine racemase (360 aa).

The Proton acceptor; specific for D-alanine role is filled by lysine 36. Position 36 is an N6-(pyridoxal phosphate)lysine (lysine 36). Residue arginine 132 participates in substrate binding. Residue tyrosine 256 is the Proton acceptor; specific for L-alanine of the active site. Methionine 304 contacts substrate.

This sequence belongs to the alanine racemase family. Pyridoxal 5'-phosphate serves as cofactor.

The enzyme catalyses L-alanine = D-alanine. It functions in the pathway amino-acid biosynthesis; D-alanine biosynthesis; D-alanine from L-alanine: step 1/1. Catalyzes the interconversion of L-alanine and D-alanine. May also act on other amino acids. The chain is Alanine racemase (alr) from Pasteurella multocida (strain Pm70).